The primary structure comprises 806 residues: Volume-regulated anion channel subunit LRRC8E (806 aa).

Topologically, residues 1-22 (MIPVAEFKQFTEQQPAFKVLKP) are cytoplasmic. Residues 23-43 (WWDVLAEYITYAMLMIGVFGC) form a helical membrane-spanning segment. Over 44–130 (TLQVTQDKII…YETALHWYAK (87 aa)) the chain is Extracellular. C54 and C311 are oxidised to a cystine. N-linked (GlcNAc...) asparagine glycosylation is found at N57 and N80. Over residues 72 to 81 (YDQQSPPSND) the composition is skewed to polar residues. The interval 72–103 (YDQQSPPSNDSDLETTIPPPTATSSPPREMSG) is disordered. Residues 131–151 (YFPYLVVIHTLIFIICGNFWF) traverse the membrane as a helical segment. The Cytoplasmic portion of the chain corresponds to 152-275 (KFPGTSSKIE…MRQTVLKVCK (124 aa)). The segment at 182–213 (EVSGESSQEKPSQERSIDRELSKPNFEEGSPA) is disordered. A compositionally biased stretch (basic and acidic residues) spans 188-207 (SQEKPSQERSIDRELSKPNF). A helical transmembrane segment spans residues 276–296 (FVLITIYNAVLVGKIHFIVPC). Residues 297 to 323 (SVHTEDMTGYNSFCCNHTKAHLFSKLA) lie on the Extracellular side of the membrane. N312 is a glycosylation site (N-linked (GlcNAc...) asparagine). Residues 324 to 344 (ITYLCFLGVYGLTCLYTLYWL) form a helical membrane-spanning segment. Residues 345 to 806 (FRRPLKEYSF…VEVRDKLKED (462 aa)) are Cytoplasmic-facing. LRR repeat units lie at residues 544-566 (LKSLKVLTIKSNLSKIPATVADV), 569-589 (HLQKFSIHNDGTKLLTLNALK), 593-614 (LVKELELVRCELERIPHAVFSL), 616-637 (NLQVLDLKENTLHTIEEIISLQ), 641-662 (KLSVLRLWHNQIAYIPEHIRKL), 664-685 (GLEELSLNRNKILVIPSQLFLC), 687-708 (KLRHLDLSNNEIRELPPEIGVL), 710-731 (LLQYLGLSGNFLEDLPNELFFC), 733-754 (KLKTLKLGQNRLGNLSPKVGSL), and 756-777 (CLVKLELKGNRMDTLPPELGNC).

This sequence belongs to the LRRC8 family. Heterohexamer; oligomerizes with other LRRC8 proteins (lrrc8a, lrrc8c, lrrc8d and/or lrrc8b) to form a heterohexamer. Detected in a channel complex that contains lrrc8a, lrrc8c and lrrc8e. In vivo, the subunit composition may depend primarily on expression levels, and heterooligomeric channels containing various proportions of the different LRRC8 proteins may coexist.

It is found in the cell membrane. Its subcellular location is the endoplasmic reticulum membrane. The protein localises to the lysosome membrane. The enzyme catalyses chloride(in) = chloride(out). It carries out the reaction iodide(out) = iodide(in). The catalysed reaction is taurine(out) = taurine(in). It catalyses the reaction 2',3'-cGAMP(out) = 2',3'-cGAMP(in). In terms of biological role, non-essential component of the volume-regulated anion channel (VRAC, also named VSOAC channel), an anion channel required to maintain a constant cell volume in response to extracellular or intracellular osmotic changes. The VRAC channel conducts iodide better than chloride and can also conduct organic osmolytes like taurine. Mediates efflux of amino acids, such as aspartate, in response to osmotic stress. The VRAC channel also mediates transport of immunoreactive cyclic dinucleotide GMP-AMP (2'-3'-cGAMP), an immune messenger produced in response to DNA virus in the cytosol. Channel activity requires lrrc8a plus at least one other family member (lrrc8b, lrrc8c, lrrc8d or lrrc8e); channel characteristics depend on the precise subunit composition. Also plays a role in lysosome homeostasis by forming functional lysosomal VRAC channels in response to low cytoplasmic ionic strength condition: lysosomal VRAC channels are necessary for the formation of large lysosome-derived vacuoles, which store and then expel excess water to maintain cytosolic water homeostasis. This is Volume-regulated anion channel subunit LRRC8E from Xenopus tropicalis (Western clawed frog).